The chain runs to 124 residues: Small ribosomal subunit protein uS12 (124 aa).

Aspartate 90 bears the 3-methylthioaspartic acid mark.

It belongs to the universal ribosomal protein uS12 family. In terms of assembly, part of the 30S ribosomal subunit. Contacts proteins S8 and S17. May interact with IF1 in the 30S initiation complex.

With S4 and S5 plays an important role in translational accuracy. Functionally, interacts with and stabilizes bases of the 16S rRNA that are involved in tRNA selection in the A site and with the mRNA backbone. Located at the interface of the 30S and 50S subunits, it traverses the body of the 30S subunit contacting proteins on the other side and probably holding the rRNA structure together. The combined cluster of proteins S8, S12 and S17 appears to hold together the shoulder and platform of the 30S subunit. In Wolbachia pipientis subsp. Culex pipiens (strain wPip), this protein is Small ribosomal subunit protein uS12.